The following is a 537-amino-acid chain: CTP synthase (537 aa).

An amidoligase domain region spans residues 1–268 (MSTKYIFVTG…DQIVCDHLKL (268 aa)). Ser14 serves as a coordination point for CTP. Ser14 lines the UTP pocket. Residue 15-20 (SIGKGI) participates in ATP binding. Tyr55 contributes to the L-glutamine binding site. Asp72 is a binding site for ATP. Mg(2+) contacts are provided by Asp72 and Glu142. CTP contacts are provided by residues 149–151 (DIE), 189–194 (KTKPTQ), and Lys225. UTP-binding positions include 189–194 (KTKPTQ) and Lys225. The Glutamine amidotransferase type-1 domain occupies 293 to 536 (RIALVGKYVE…VTAAVEKSSD (244 aa)). Residue Gly355 coordinates L-glutamine. Cys382 acts as the Nucleophile; for glutamine hydrolysis in catalysis. L-glutamine is bound by residues 383–386 (LGMQ), Glu406, and Arg464. Active-site residues include His509 and Glu511.

This sequence belongs to the CTP synthase family. In terms of assembly, homotetramer.

The catalysed reaction is UTP + L-glutamine + ATP + H2O = CTP + L-glutamate + ADP + phosphate + 2 H(+). It carries out the reaction L-glutamine + H2O = L-glutamate + NH4(+). The enzyme catalyses UTP + NH4(+) + ATP = CTP + ADP + phosphate + 2 H(+). Its pathway is pyrimidine metabolism; CTP biosynthesis via de novo pathway; CTP from UDP: step 2/2. Its activity is regulated as follows. Allosterically activated by GTP, when glutamine is the substrate; GTP has no effect on the reaction when ammonia is the substrate. The allosteric effector GTP functions by stabilizing the protein conformation that binds the tetrahedral intermediate(s) formed during glutamine hydrolysis. Inhibited by the product CTP, via allosteric rather than competitive inhibition. In terms of biological role, catalyzes the ATP-dependent amination of UTP to CTP with either L-glutamine or ammonia as the source of nitrogen. Regulates intracellular CTP levels through interactions with the four ribonucleotide triphosphates. The protein is CTP synthase of Streptococcus sanguinis (strain SK36).